A 382-amino-acid polypeptide reads, in one-letter code: Membrane protein MLC1 (382 aa).

Basic and acidic residues predominate over residues 1–28 (MTREGQFREELGYDRMPTLERGRQDAGR). The tract at residues 1-43 (MTREGQFREELGYDRMPTLERGRQDAGRQDPGSYTPDSKPKDL) is disordered. Helical transmembrane passes span 58 to 78 (WVFS…SLYL), 88 to 107 (YLRC…FAVG), 117 to 137 (FQIL…WFGC), and 148 to 168 (INFN…TVII). Ser183, Ser185, and Ser188 each carry phosphoserine. 4 helical membrane passes run 205–225 (SVVE…ALNV), 234–254 (LSVT…ASHV), 263–283 (LVEV…TASG), and 309–329 (LLLL…GTAI).

In terms of assembly, interacts with ATP1B1. Part of a complex containing ATP1B1, TRPV4, AQP4 and HEPACAM.

The protein localises to the membrane. Its subcellular location is the cell membrane. The protein resides in the cytoplasm. It localises to the perinuclear region. It is found in the endoplasmic reticulum. In terms of biological role, transmembrane protein mainly expressed in brain astrocytes that may play a role in transport across the blood-brain and brain-cerebrospinal fluid barriers. Regulates the response of astrocytes to hypo-osmosis by promoting calcium influx. May function as regulatory protein of membrane protein complexes such as ion channels. The chain is Membrane protein MLC1 from Mus musculus (Mouse).